A 181-amino-acid polypeptide reads, in one-letter code: Protein GrpE (181 aa).

A compositionally biased stretch (polar residues) spans 1 to 13 (MENTQENPATQSA). The interval 1–34 (MENTQENPATQSAEDIGSAKQAAQGAAPAAEAAD) is disordered. Over residues 19–34 (AKQAAQGAAPAAEAAD) the composition is skewed to low complexity.

The protein belongs to the GrpE family. Homodimer.

Its subcellular location is the cytoplasm. In terms of biological role, participates actively in the response to hyperosmotic and heat shock by preventing the aggregation of stress-denatured proteins, in association with DnaK and GrpE. It is the nucleotide exchange factor for DnaK and may function as a thermosensor. Unfolded proteins bind initially to DnaJ; upon interaction with the DnaJ-bound protein, DnaK hydrolyzes its bound ATP, resulting in the formation of a stable complex. GrpE releases ADP from DnaK; ATP binding to DnaK triggers the release of the substrate protein, thus completing the reaction cycle. Several rounds of ATP-dependent interactions between DnaJ, DnaK and GrpE are required for fully efficient folding. The chain is Protein GrpE from Burkholderia vietnamiensis (strain G4 / LMG 22486) (Burkholderia cepacia (strain R1808)).